Reading from the N-terminus, the 310-residue chain is N-acetyl-gamma-glutamyl-phosphate reductase (310 aa).

The active site involves Cys117.

The protein belongs to the NAGSA dehydrogenase family. Type 2 subfamily.

The protein resides in the cytoplasm. It carries out the reaction N-acetyl-L-glutamate 5-semialdehyde + phosphate + NADP(+) = N-acetyl-L-glutamyl 5-phosphate + NADPH + H(+). The protein operates within amino-acid biosynthesis; L-arginine biosynthesis; N(2)-acetyl-L-ornithine from L-glutamate: step 3/4. Catalyzes the NADPH-dependent reduction of N-acetyl-5-glutamyl phosphate to yield N-acetyl-L-glutamate 5-semialdehyde. The sequence is that of N-acetyl-gamma-glutamyl-phosphate reductase from Rhizobium rhizogenes (strain K84 / ATCC BAA-868) (Agrobacterium radiobacter).